The primary structure comprises 187 residues: Elongation factor P (187 aa).

It belongs to the elongation factor P family.

The protein resides in the cytoplasm. It functions in the pathway protein biosynthesis; polypeptide chain elongation. Involved in peptide bond synthesis. Stimulates efficient translation and peptide-bond synthesis on native or reconstituted 70S ribosomes in vitro. Probably functions indirectly by altering the affinity of the ribosome for aminoacyl-tRNA, thus increasing their reactivity as acceptors for peptidyl transferase. This is Elongation factor P from Mycoplasmopsis agalactiae (strain NCTC 10123 / CIP 59.7 / PG2) (Mycoplasma agalactiae).